A 1041-amino-acid polypeptide reads, in one-letter code: Histone deacetylase complex subunit SAP130-B (1041 aa).

Disordered regions lie at residues 1-62, 111-131, 572-592, 614-769, and 806-852; these read MSSQ…QEPV, KSTMPSRPIAPAPPSALSAVP, TNQGVQTSSVSSQQASSEPKS, TPAG…PSGA, and VLAN…DEER. The segment covering 18-30 has biased composition (polar residues); sequence VSNSGASVGQNVQ. Positions 33–42 are enriched in basic and acidic residues; the sequence is EVAREIDVQS. The segment covering 576–592 has biased composition (low complexity); the sequence is VQTSSVSSQQASSEPKS. A compositionally biased stretch (polar residues) spans 614 to 641; the sequence is TPAGTTVMQSHSQSPGIGSSPAQGSSPR. A compositionally biased stretch (low complexity) spans 707–728; sequence PGAADQPSAAASLPSSHHPTAA.

Belongs to the SAP130 family.

The protein resides in the nucleus. In terms of biological role, acts as a transcriptional repressor. This chain is Histone deacetylase complex subunit SAP130-B (sap130-b), found in Xenopus laevis (African clawed frog).